Consider the following 788-residue polypeptide: 5-methyltetrahydropteroyltriglutamate--homocysteine methyltransferase (788 aa).

5-methyltetrahydropteroyltri-L-glutamate is bound by residues 24-27 and Lys-140; that span reads RELK. Residues 463–465 and Glu-516 each bind L-homocysteine; that span reads IGS. L-methionine is bound by residues 463–465 and Glu-516; that span reads IGS. 5-methyltetrahydropteroyltri-L-glutamate contacts are provided by residues 547–548 and Trp-593; that span reads RC. L-homocysteine is bound at residue Asp-631. Asp-631 contacts L-methionine. Residue Glu-637 participates in 5-methyltetrahydropteroyltri-L-glutamate binding. Zn(2+)-binding residues include His-673, Cys-675, and Glu-697. Catalysis depends on His-726, which acts as the Proton donor. Cys-758 serves as a coordination point for Zn(2+).

It belongs to the vitamin-B12 independent methionine synthase family. Zn(2+) is required as a cofactor.

The catalysed reaction is 5-methyltetrahydropteroyltri-L-glutamate + L-homocysteine = tetrahydropteroyltri-L-glutamate + L-methionine. It participates in amino-acid biosynthesis; L-methionine biosynthesis via de novo pathway; L-methionine from L-homocysteine (MetE route): step 1/1. In terms of biological role, catalyzes the transfer of a methyl group from 5-methyltetrahydrofolate to homocysteine resulting in methionine formation. The chain is 5-methyltetrahydropteroyltriglutamate--homocysteine methyltransferase from Rhodopseudomonas palustris (strain TIE-1).